Here is a 375-residue protein sequence, read N- to C-terminus: E3 ubiquitin-protein ligase FANCL (375 aa).

Position 2 is an N-acetylalanine (Ala2). The interval 104–294 (LPPPPQFYSS…KDVLEIDFPA (191 aa)) is UBC-RWD region (URD). Zn(2+) is bound by residues Cys307, Cys310, Cys324, Cys329, His334, Cys337, Cys359, and Cys362. Residues 307–363 (CGICYAYQLDGTIPDQVCDNSQCGQPFHQICLYEWLRGLLTSRQSFNIIFGECPYCS) form an RING-type; degenerate zinc finger.

In terms of assembly, interacts with GGN. Belongs to the multisubunit FA complex composed of FANCA, FANCB, FANCC, FANCE, FANCF, FANCG, FANCL/PHF9 and FANCM. The complex is not found in FA patients. In complex with FANCF, FANCA and FANCG, but not with FANCC, nor FANCE, interacts with HES1; this interaction may be essential for the stability and nuclear localization of FA core complex proteins. Interacts with FANCI. Directly interacts (via the RING-type zinc finger) with UBE2T and UBE2W. In terms of processing, the RING-type zinc finger domain is monoubiquitinated in the presence of UBE2T and UBE2W.

Its subcellular location is the cytoplasm. It localises to the nucleus. The catalysed reaction is S-ubiquitinyl-[E2 ubiquitin-conjugating enzyme]-L-cysteine + [acceptor protein]-L-lysine = [E2 ubiquitin-conjugating enzyme]-L-cysteine + N(6)-ubiquitinyl-[acceptor protein]-L-lysine.. It functions in the pathway protein modification; protein ubiquitination. Ubiquitin ligase protein that mediates monoubiquitination of FANCD2 in the presence of UBE2T, a key step in the DNA damage pathway. Also mediates monoubiquitination of FANCI. May stimulate the ubiquitin release from UBE2W. May be required for proper primordial germ cell proliferation in the embryonic stage, whereas it is probably not needed for spermatogonial proliferation after birth. In Homo sapiens (Human), this protein is E3 ubiquitin-protein ligase FANCL (FANCL).